The sequence spans 547 residues: Vacuolar fusion protein MON1 homolog B (547 aa).

Position 1 is an N-acetylmethionine (Met-1). Residues 1-106 form a disordered region; the sequence is MEAGGDTAAP…GGDPSDEEWR (106 aa). The span at 57–66 shows a compositional bias: pro residues; the sequence is PPSPSPPPQS. Phosphoserine is present on residues Ser-59 and Ser-61.

Belongs to the MON1/SAND family. Interacts with CCNT2; down-regulates CCNT2-mediated activation of viral promoters during herpes simplex virus 1/HHV-1 infection. Found in a complex with RMC1, CCZ1 MON1A and MON1B.

The chain is Vacuolar fusion protein MON1 homolog B (MON1B) from Macaca fascicularis (Crab-eating macaque).